We begin with the raw amino-acid sequence, 413 residues long: Serine hydroxymethyltransferase (413 aa).

(6S)-5,6,7,8-tetrahydrofolate contacts are provided by residues Leu-117 and 121 to 123 (GHL). An N6-(pyridoxal phosphate)lysine modification is found at Lys-226. Residues Glu-239 and 349–351 (SPF) contribute to the (6S)-5,6,7,8-tetrahydrofolate site.

Belongs to the SHMT family. Homodimer. Requires pyridoxal 5'-phosphate as cofactor.

The protein localises to the cytoplasm. It catalyses the reaction (6R)-5,10-methylene-5,6,7,8-tetrahydrofolate + glycine + H2O = (6S)-5,6,7,8-tetrahydrofolate + L-serine. Its pathway is one-carbon metabolism; tetrahydrofolate interconversion. The protein operates within amino-acid biosynthesis; glycine biosynthesis; glycine from L-serine: step 1/1. In terms of biological role, catalyzes the reversible interconversion of serine and glycine with tetrahydrofolate (THF) serving as the one-carbon carrier. This reaction serves as the major source of one-carbon groups required for the biosynthesis of purines, thymidylate, methionine, and other important biomolecules. Also exhibits THF-independent aldolase activity toward beta-hydroxyamino acids, producing glycine and aldehydes, via a retro-aldol mechanism. The polypeptide is Serine hydroxymethyltransferase (Bacillus cytotoxicus (strain DSM 22905 / CIP 110041 / 391-98 / NVH 391-98)).